The following is a 435-amino-acid chain: uncharacterized protein (435 aa).

S-adenosyl-L-methionine-binding residues include Q261, Y294, E318, and D366. The active-site Nucleophile is C393.

Belongs to the class I-like SAM-binding methyltransferase superfamily. RNA M5U methyltransferase family.

This is an uncharacterized protein from Bifidobacterium longum (strain NCC 2705).